We begin with the raw amino-acid sequence, 424 residues long: Exodeoxyribonuclease 7 large subunit (424 aa).

This sequence belongs to the XseA family. In terms of assembly, heterooligomer composed of large and small subunits.

It is found in the cytoplasm. It catalyses the reaction Exonucleolytic cleavage in either 5'- to 3'- or 3'- to 5'-direction to yield nucleoside 5'-phosphates.. Bidirectionally degrades single-stranded DNA into large acid-insoluble oligonucleotides, which are then degraded further into small acid-soluble oligonucleotides. This Cyanothece sp. (strain PCC 7425 / ATCC 29141) protein is Exodeoxyribonuclease 7 large subunit.